Reading from the N-terminus, the 183-residue chain is Adenine phosphoribosyltransferase (183 aa).

It belongs to the purine/pyrimidine phosphoribosyltransferase family. Homodimer.

The protein localises to the cytoplasm. The catalysed reaction is AMP + diphosphate = 5-phospho-alpha-D-ribose 1-diphosphate + adenine. Its pathway is purine metabolism; AMP biosynthesis via salvage pathway; AMP from adenine: step 1/1. Functionally, catalyzes a salvage reaction resulting in the formation of AMP, that is energically less costly than de novo synthesis. The protein is Adenine phosphoribosyltransferase of Cronobacter sakazakii (strain ATCC BAA-894) (Enterobacter sakazakii).